A 1456-amino-acid polypeptide reads, in one-letter code: Ig-like and fibronectin type-III domain-containing protein C27B7.7 (1456 aa).

Positions 1–16 (MISLSLVLLLLFGVRC) are cleaved as a signal peptide. Fibronectin type-III domains lie at 24 to 128 (NDDS…SINT) and 132 to 227 (IPKA…TNST). Asparagine 64, asparagine 146, asparagine 164, asparagine 198, and asparagine 225 each carry an N-linked (GlcNAc...) asparagine glycan. The 87-residue stretch at 236 to 322 (PDEEYTADPQ…DAGDSSKEVN (87 aa)) folds into the Ig-like 1 domain. A disulfide bond links cysteine 254 and cysteine 308. Residues 328–426 (PGSPPSEITL…VAMERDTQPI (99 aa)) form the Fibronectin type-III 3 domain. N-linked (GlcNAc...) asparagine glycosylation is found at asparagine 471, asparagine 497, and asparagine 517. Fibronectin type-III domains follow at residues 531–631 (APTQ…TLNG), 636–736 (PPDN…TAYS), and 737–846 (EVPI…WFRT). 3 N-linked (GlcNAc...) asparagine glycosylation sites follow: asparagine 658, asparagine 691, and asparagine 692. The 108-residue stretch at 841-948 (PRWFRTGHGK…GSSSASVEIR (108 aa)) folds into the Ig-like 2 domain. A disulfide bridge connects residues cysteine 877 and cysteine 932. N-linked (GlcNAc...) asparagine glycans are attached at residues asparagine 893, asparagine 898, asparagine 969, asparagine 1091, asparagine 1120, asparagine 1133, asparagine 1151, asparagine 1207, asparagine 1268, asparagine 1277, asparagine 1298, asparagine 1350, asparagine 1357, and asparagine 1382. The Fibronectin type-III 7 domain occupies 955-1050 (PPENIILTAY…SCISDVLYET (96 aa)). 3 Fibronectin type-III domains span residues 1148 to 1234 (APTN…TPNG), 1236 to 1343 (PKTA…ISFD), and 1347 to 1438 (VIDN…SSPS). A disordered region spans residues 1419–1456 (LGRESPPSEEIDLEFISSPSPTPIISGSRRKVIKEPPL). Residues 1434-1445 (ISSPSPTPIISG) are compositionally biased toward low complexity.

The protein resides in the secreted. In Caenorhabditis elegans, this protein is Ig-like and fibronectin type-III domain-containing protein C27B7.7.